The primary structure comprises 732 residues: MSDTPASTFGGRRAVPPNNSNAAEVDLPTEELQGLVPRGVNLKDYLNVTAVHLFKERWDSNKIDHHTDKYDNNKLIVRRGQTFYIQIDFNRPYDPRKDLFRVEYVIGRYPQENKGTYIPVPVVKELQSGKWGAKVIMNEDRSVRLSVQSSPECIVGKFRMYVAVWTPYGILRTRRDPETDTYILFNPWCEEDAVYLDDEKEREEYVLNDIGVIFYGDFKDIKSRSWSYGQFEDGILDTCLYVMDKAEMDLSGRGNPIKVSRVGSAMVNAKDDEGVLVGSWDNVYAYGIPPSAWTGSVDILLEYRSSETPVRYGQCWVFAGVFNTFLRCLGIPARVITNYFSAHDNDANLQMDIFLEEDGNVSSKLTKDSVWNYHCWNEAWMTRPDLPVGFGGWQAVDSTPQENSDGMYRCGPASVQAVKHGHVCFQFDAPFVFAEVNSDLVYITAKQDGTHVVEAVDATHIGKLIVTKQIGGDGMQDITDTYKFQEGQEEERLALETALMYGAKKTLNTEGVVKSRSDVTMNFDVENAVLGKDFKVTITFQNNSSNLYTILAYLSGNITFYTGVSKKEFKKESFEETLDPFSSKKKEVLVRAGEYMSHLLEQGFLHFFVTARINESRDVLAKQKSIILTIPKITIKVRGAAMVGSDMVVTVEFTNPLKETLQNVWIHLDGPGVMRPKRKVFREIRPNTTVQWEEVCRPWVSGHRKLIASMTSDSLRHVYGELDLQIQRRPTM.

Residues 1–26 (MSDTPASTFGGRRAVPPNNSNAAEVD) are disordered. S2 is subject to N-acetylserine. Residues 2-38 (SDTPASTFGGRRAVPPNNSNAAEVDLPTEELQGLVPR) constitute a propeptide, activation peptide. Catalysis depends on residues C315, H374, and D397. N437, D439, E486, and E491 together coordinate Ca(2+). A glycan (N-linked (GlcNAc...) asparagine) is linked at N614.

Belongs to the transglutaminase superfamily. Transglutaminase family. As to quaternary structure, tetramer of two A chains (F13A1) and two B (F13B) chains. Ca(2+) is required as a cofactor. Post-translationally, the activation peptide is released by thrombin.

Its subcellular location is the cytoplasm. It localises to the secreted. The catalysed reaction is L-glutaminyl-[protein] + L-lysyl-[protein] = [protein]-L-lysyl-N(6)-5-L-glutamyl-[protein] + NH4(+). Functionally, factor XIII is activated by thrombin and calcium ion to a transglutaminase that catalyzes the formation of gamma-glutamyl-epsilon-lysine cross-links between fibrin chains, thus stabilizing the fibrin clot. Also cross-link alpha-2-plasmin inhibitor, or fibronectin, to the alpha chains of fibrin. This chain is Coagulation factor XIII A chain (F13a1), found in Mus musculus (Mouse).